Here is a 158-residue protein sequence, read N- to C-terminus: Glycine/sarcosine/betaine reductase complex component A (158 aa).

Sec-44 is a catalytic residue. Residue Sec-44 is a non-standard amino acid, selenocysteine.

This sequence belongs to the GrdA family. As to quaternary structure, monomer. Component of the glycine, sarcosine and betaine reductase complexes, together with components B and C.

The catalysed reaction is acetyl phosphate + [thioredoxin]-disulfide + NH4(+) + H2O = [thioredoxin]-dithiol + glycine + phosphate + H(+). It catalyses the reaction acetyl phosphate + methylamine + [thioredoxin]-disulfide + H2O = sarcosine + [thioredoxin]-dithiol + phosphate + H(+). The enzyme catalyses acetyl phosphate + trimethylamine + [thioredoxin]-disulfide + H2O = glycine betaine + [thioredoxin]-dithiol + phosphate + H(+). Functionally, in the first step of glycine, betaine and sarcosine reductases, the substrate is bound to component PB via a Schiff base intermediate. Then the PB-activated substrate is nucleophilically attacked by the selenol anion of component PA to transform it to a carboxymethylated selenoether and the respective amine. By action of component PC, acetyl phosphate is formed, leaving component PA in its oxidized state. Finally component PA becomes reduced by the thioredoxin system to start a new catalytic cycle of reductive deamination. In Clostridium botulinum (strain ATCC 19397 / Type A), this protein is Glycine/sarcosine/betaine reductase complex component A.